The chain runs to 425 residues: 2-methylserine hydroxymethyltransferase (425 aa).

Residues L126 and 130–132 each bind (6S)-5,6,7,8-tetrahydrofolate; that span reads GHL. The residue at position 235 (K235) is an N6-(pyridoxal phosphate)lysine. Position 251 (E251) interacts with (6S)-5,6,7,8-tetrahydrofolate.

The protein belongs to the SHMT family. In terms of assembly, homodimer. Pyridoxal 5'-phosphate is required as a cofactor.

It localises to the cytoplasm. The enzyme catalyses (6R)-5,10-methylene-5,6,7,8-tetrahydrofolate + D-alanine + H2O = 2-methylserine + (6S)-5,6,7,8-tetrahydrofolate. Its pathway is one-carbon metabolism; tetrahydrofolate interconversion. Inhibited by hydroxylamine and sodium borohydride. In terms of biological role, catalyzes the reversible interconversion of alpha-methyl-L-serine to D-alanine with tetrahydrofolate (THF) serving as the one-carbon carrier. Cannot use alpha-methyl-D-serine, L-serine, D-serine or L-alanine. The protein is 2-methylserine hydroxymethyltransferase of Paracoccus sp.